Consider the following 219-residue polypeptide: Peroxiredoxin-5, mitochondrial (219 aa).

The N-terminal 57 residues, 1 to 57, are a transit peptide targeting the mitochondrion; the sequence is MRLGWLRVLGCRPGSVVSRATIVEGASTTAAGTRGCLEGILEWTFGGVRGFRSAAVA. The Thioredoxin domain occupies 61-219; that stretch reads IKVGDAIPSV…SLAPNILSQL (159 aa). Residue K80 is modified to N6-acetyllysine. K88 carries the N6-acetyllysine; alternate modification. K88 carries the post-translational modification N6-succinyllysine; alternate. C105 serves as the catalytic Cysteine sulfenic acid (-SOH) intermediate. C105 carries S-palmitoyl cysteine lipidation. The cysteines at positions 105 and 209 are disulfide-linked. K121 is subject to N6-succinyllysine. Position 187 is a phosphoserine (S187). Residues 217–219 carry the Microbody targeting signal motif; that stretch reads SQL.

Belongs to the peroxiredoxin family. Prx5 subfamily. As to quaternary structure, monomer. In terms of processing, S-palmitoylated. Palmitoylation occurs on the active site, inhibiting its reactivity; therefore PRDX5 palmitoylation status determines its antioxidant capacity. S-palmitoylated. Depalmitoylated by ABHD10.

It localises to the mitochondrion. The protein localises to the cytoplasm. Its subcellular location is the peroxisome matrix. The enzyme catalyses a hydroperoxide + [thioredoxin]-dithiol = an alcohol + [thioredoxin]-disulfide + H2O. Its function is as follows. Thiol-specific peroxidase that catalyzes the reduction of hydrogen peroxide and organic hydroperoxides to water and alcohols, respectively. Plays a role in cell protection against oxidative stress by detoxifying peroxides and as sensor of hydrogen peroxide-mediated signaling events. This is Peroxiredoxin-5, mitochondrial (PRDX5) from Bos taurus (Bovine).